A 415-amino-acid polypeptide reads, in one-letter code: Probable glucuronosyltransferase Os03g0287800 (415 aa).

Topologically, residues 1-25 (MGSSTDHGGAGGRGKKGSGSQLWKK) are cytoplasmic. The helical; Signal-anchor for type II membrane protein transmembrane segment at 26 to 43 (ALLHSSLCFVMGFFTGFA) threads the bilayer. Residues 44–415 (PSSVSDWTSA…GGRFLSGDFC (372 aa)) are Lumenal-facing. N-linked (GlcNAc...) asparagine glycans are attached at residues Asn-78, Asn-165, Asn-257, and Asn-287.

Belongs to the glycosyltransferase 43 family.

Its subcellular location is the golgi apparatus membrane. Its function is as follows. Involved in the synthesis of glucuronoxylan hemicellulose in secondary cell walls. In Oryza sativa subsp. japonica (Rice), this protein is Probable glucuronosyltransferase Os03g0287800.